A 456-amino-acid chain; its full sequence is Gamma-aminobutyric acid receptor subunit alpha-1 (456 aa).

The N-terminal stretch at 1 to 27 (MRKSPGLSDCLWAWILLLSTLTGRSYG) is a signal peptide. At 28-253 (QPSLQDELKD…FHLKRKIGYF (226 aa)) the chain is on the extracellular side. A glycan (N-linked (GlcNAc...) asparagine) is linked at N38. A 4-aminobutanoate-binding site is contributed by R94. N-linked (GlcNAc...) asparagine glycosylation occurs at N138. T157 is a binding site for 4-aminobutanoate. Cysteines 166 and 180 form a disulfide. Residues 254 to 274 (VIQTYLPCIMTVILSQVSFWL) form a helical membrane-spanning segment. Residue W273 coordinates 3alpha-hydroxy-5alpha-pregnan-11,20-dione. Over 275-279 (NRESV) the chain is Cytoplasmic. Residues 280–301 (PARTVFGVTTVLTMTTLSISAR) traverse the membrane as a helical segment. Topologically, residues 302–311 (NSLPKVAYAT) are extracellular. A helical transmembrane segment spans residues 312 to 333 (AMDWFIAVCYAFVFSALIEFAT). Over 334–421 (VNYFTKRGYA…TFNSVSKIDR (88 aa)) the chain is Cytoplasmic. The helical transmembrane segment at 422–441 (LSRIAFPLLFGIFNLVYWAT) threads the bilayer. Topologically, residues 442-456 (YLNREPQLKAPTPHQ) are extracellular.

This sequence belongs to the ligand-gated ion channel (TC 1.A.9) family. Gamma-aminobutyric acid receptor (TC 1.A.9.5) subfamily. GABRA1 sub-subfamily. As to quaternary structure, heteropentamer, formed by a combination of alpha (GABRA1-6), beta (GABRB1-3), gamma (GABRG1-3), delta (GABRD), epsilon (GABRE), rho (GABRR1-3), pi (GABRP) and theta (GABRQ) subunits, each subunit exhibiting distinct physiological and pharmacological properties. Interacts with UBQLN1. Interacts with TRAK1. Interacts with KIF21B. Identified in a complex of 720 kDa composed of LHFPL4, NLGN2, GABRA1, GABRB2, GABRG2 and GABRB3. Interacts with LHFPL4. Interacts with NLGN2. Interacts with SHISA7; interaction leads regulation of GABAAR trafficking, channel deactivation kinetics and pharmacology.

It localises to the postsynaptic cell membrane. It is found in the cell membrane. The protein resides in the cytoplasmic vesicle membrane. It carries out the reaction chloride(in) = chloride(out). Its activity is regulated as follows. Allosterically activated by benzodiazepines and the anesthetic alphaxalone. Allosterically activated by pentobarbital. Inhibited by the antagonist bicuculline. Potentiated by histamine. Its function is as follows. Alpha subunit of the heteropentameric ligand-gated chloride channel gated by Gamma-aminobutyric acid (GABA), a major inhibitory neurotransmitter in the brain. GABA-gated chloride channels, also named GABA(A) receptors (GABAAR), consist of five subunits arranged around a central pore and contain GABA active binding site(s) located at the alpha and beta subunit interface(s). When activated by GABA, GABAARs selectively allow the flow of chloride anions across the cell membrane down their electrochemical gradient. Alpha-1/GABRA1-containing GABAARs are largely synaptic. Chloride influx into the postsynaptic neuron following GABAAR opening decreases the neuron ability to generate a new action potential, thereby reducing nerve transmission. GABAARs containing alpha-1 and beta-2 or -3 subunits exhibit synaptogenic activity; the gamma-2 subunit being necessary but not sufficient to induce rapid synaptic contacts formation. GABAARs function also as histamine receptor where histamine binds at the interface of two neighboring beta subunits and potentiates GABA response. GABAARs containing alpha, beta and epsilon subunits also permit spontaneous chloride channel activity while preserving the structural information required for GABA-gated openings. Alpha-1-mediated plasticity in the orbitofrontal cortex regulates context-dependent action selection. Together with rho subunits, may also control neuronal and glial GABAergic transmission in the cerebellum. This chain is Gamma-aminobutyric acid receptor subunit alpha-1, found in Homo sapiens (Human).